Reading from the N-terminus, the 194-residue chain is dITP/XTP pyrophosphatase (194 aa).

Residue 8–13 (TNNPHK) participates in substrate binding. The active-site Proton acceptor is aspartate 69. Aspartate 69 serves as a coordination point for Mg(2+). Residues threonine 70, 150–153 (FGYD), lysine 173, and 178–179 (HR) each bind substrate.

This sequence belongs to the HAM1 NTPase family. In terms of assembly, homodimer. Requires Mg(2+) as cofactor.

It carries out the reaction XTP + H2O = XMP + diphosphate + H(+). It catalyses the reaction dITP + H2O = dIMP + diphosphate + H(+). The enzyme catalyses ITP + H2O = IMP + diphosphate + H(+). In terms of biological role, pyrophosphatase that catalyzes the hydrolysis of nucleoside triphosphates to their monophosphate derivatives, with a high preference for the non-canonical purine nucleotides XTP (xanthosine triphosphate), dITP (deoxyinosine triphosphate) and ITP. Seems to function as a house-cleaning enzyme that removes non-canonical purine nucleotides from the nucleotide pool, thus preventing their incorporation into DNA/RNA and avoiding chromosomal lesions. The protein is dITP/XTP pyrophosphatase of Porphyromonas gingivalis (strain ATCC BAA-308 / W83).